The chain runs to 348 residues: Holliday junction branch migration complex subunit RuvB (348 aa).

Residues 4–198 (TTDYGASNTG…FGFTAHLDFY (195 aa)) form a large ATPase domain (RuvB-L) region. Residues Leu37, Arg38, Gly79, Lys82, Thr83, Thr84, 145–147 (EDF), Arg188, Tyr198, and Arg235 contribute to the ATP site. Thr83 serves as a coordination point for Mg(2+). The small ATPAse domain (RuvB-S) stretch occupies residues 199–269 (PHEELEKLIE…DVKEALALYQ (71 aa)). Positions 272–348 (SEGLDRLDIA…DIIFGNYAQR (77 aa)) are head domain (RuvB-H). Positions 327 and 332 each coordinate DNA.

This sequence belongs to the RuvB family. As to quaternary structure, homohexamer. Forms an RuvA(8)-RuvB(12)-Holliday junction (HJ) complex. HJ DNA is sandwiched between 2 RuvA tetramers; dsDNA enters through RuvA and exits via RuvB. An RuvB hexamer assembles on each DNA strand where it exits the tetramer. Each RuvB hexamer is contacted by two RuvA subunits (via domain III) on 2 adjacent RuvB subunits; this complex drives branch migration. In the full resolvosome a probable DNA-RuvA(4)-RuvB(12)-RuvC(2) complex forms which resolves the HJ.

The protein localises to the cytoplasm. It catalyses the reaction ATP + H2O = ADP + phosphate + H(+). Functionally, the RuvA-RuvB-RuvC complex processes Holliday junction (HJ) DNA during genetic recombination and DNA repair, while the RuvA-RuvB complex plays an important role in the rescue of blocked DNA replication forks via replication fork reversal (RFR). RuvA specifically binds to HJ cruciform DNA, conferring on it an open structure. The RuvB hexamer acts as an ATP-dependent pump, pulling dsDNA into and through the RuvAB complex. RuvB forms 2 homohexamers on either side of HJ DNA bound by 1 or 2 RuvA tetramers; 4 subunits per hexamer contact DNA at a time. Coordinated motions by a converter formed by DNA-disengaged RuvB subunits stimulates ATP hydrolysis and nucleotide exchange. Immobilization of the converter enables RuvB to convert the ATP-contained energy into a lever motion, pulling 2 nucleotides of DNA out of the RuvA tetramer per ATP hydrolyzed, thus driving DNA branch migration. The RuvB motors rotate together with the DNA substrate, which together with the progressing nucleotide cycle form the mechanistic basis for DNA recombination by continuous HJ branch migration. Branch migration allows RuvC to scan DNA until it finds its consensus sequence, where it cleaves and resolves cruciform DNA. This chain is Holliday junction branch migration complex subunit RuvB, found in Bifidobacterium longum (strain DJO10A).